A 535-amino-acid chain; its full sequence is Alkaline phosphatase, placental type (535 aa).

The first 22 residues, 1 to 22, serve as a signal peptide directing secretion; sequence MLGPCMLLLLLLLGLRLQLSLG. Asp64 contacts Mg(2+). Zn(2+) is bound by residues Asp64 and Ser114. Residue Ser114 is the Phosphoserine intermediate of the active site. A disulfide bridge links Cys143 with Cys205. A glycan (N-linked (GlcNAc...) asparagine) is linked at Asn144. Mg(2+) is bound at residue Ser177. Glu238 provides a ligand contact to Ca(2+). N-linked (GlcNAc...) asparagine glycosylation occurs at Asn271. Phe291, Glu292, and Asp307 together coordinate Ca(2+). Glu333 serves as a coordination point for Mg(2+). Zn(2+) is bound by residues Asp338, His342, Asp379, and His380. Residues 425–449 form a disordered region; sequence DGARPDVTESESGSPEYRQQSAVPL. Polar residues predominate over residues 434–446; it reads SESGSPEYRQQSA. Residue His454 participates in Zn(2+) binding. Cysteines 489 and 496 form a disulfide. Asp506 carries GPI-anchor amidated aspartate lipidation. A propeptide spans 507 to 535 (removed in mature form); that stretch reads AAHPGRSVVPALLPLLAGTLLLLETATAP. A helical transmembrane segment spans residues 513 to 529; sequence SVVPALLPLLAGTLLLL.

The protein belongs to the alkaline phosphatase family. As to quaternary structure, homodimer. Requires Mg(2+) as cofactor. The cofactor is Zn(2+). Ca(2+) serves as cofactor. In terms of tissue distribution, detected in placenta (at protein level).

It is found in the cell membrane. The catalysed reaction is a phosphate monoester + H2O = an alcohol + phosphate. Alkaline phosphatase that can hydrolyze various phosphate compounds. The polypeptide is Alkaline phosphatase, placental type (Homo sapiens (Human)).